The primary structure comprises 345 residues: Glycerol-3-phosphate dehydrogenase [NAD(P)+] (345 aa).

Positions 23, 24, 44, and 118 each coordinate NADPH. The sn-glycerol 3-phosphate site is built by K118, G147, and T149. NADPH is bound at residue A151. Sn-glycerol 3-phosphate-binding residues include K203, D256, S266, R267, and N268. K203 acts as the Proton acceptor in catalysis. R267 is a binding site for NADPH. Positions 291 and 293 each coordinate NADPH.

Belongs to the NAD-dependent glycerol-3-phosphate dehydrogenase family.

The protein resides in the cytoplasm. It carries out the reaction sn-glycerol 3-phosphate + NAD(+) = dihydroxyacetone phosphate + NADH + H(+). The catalysed reaction is sn-glycerol 3-phosphate + NADP(+) = dihydroxyacetone phosphate + NADPH + H(+). Its pathway is membrane lipid metabolism; glycerophospholipid metabolism. Catalyzes the reduction of the glycolytic intermediate dihydroxyacetone phosphate (DHAP) to sn-glycerol 3-phosphate (G3P), the key precursor for phospholipid synthesis. This Vibrio vulnificus (strain CMCP6) protein is Glycerol-3-phosphate dehydrogenase [NAD(P)+].